A 246-amino-acid polypeptide reads, in one-letter code: 5'-nucleotidase SurE (246 aa).

Residues aspartate 8, aspartate 9, serine 39, and asparagine 91 each coordinate a divalent metal cation.

Belongs to the SurE nucleotidase family. A divalent metal cation is required as a cofactor.

Its subcellular location is the cytoplasm. It catalyses the reaction a ribonucleoside 5'-phosphate + H2O = a ribonucleoside + phosphate. In terms of biological role, nucleotidase that shows phosphatase activity on nucleoside 5'-monophosphates. In Histophilus somni (strain 129Pt) (Haemophilus somnus), this protein is 5'-nucleotidase SurE.